We begin with the raw amino-acid sequence, 340 residues long: Tryptophan--tRNA ligase (340 aa).

ATP-binding positions include R11–T13 and G19–H20. Residues P12–H20 carry the 'HIGH' region motif. D140 is an L-tryptophan binding site. ATP contacts are provided by residues G152–D154, L194, and K202–S206. The short motif at K202–S206 is the 'KMSKS' region element.

This sequence belongs to the class-I aminoacyl-tRNA synthetase family. In terms of assembly, homodimer.

The protein localises to the cytoplasm. It catalyses the reaction tRNA(Trp) + L-tryptophan + ATP = L-tryptophyl-tRNA(Trp) + AMP + diphosphate + H(+). Functionally, catalyzes the attachment of tryptophan to tRNA(Trp). The polypeptide is Tryptophan--tRNA ligase (Streptococcus mutans serotype c (strain ATCC 700610 / UA159)).